A 131-amino-acid chain; its full sequence is Fatty acid-binding protein (131 aa).

Residues Arg106 and 126-128 each bind (5Z,8Z,11Z,14Z)-eicosatetraenoate; that span reads RPY. (9Z)-octadecenoate is bound by residues Arg106 and 126-128; that span reads RPY.

Belongs to the calycin superfamily. Fatty-acid binding protein (FABP) family.

Its subcellular location is the cytoplasm. FABPs are thought to play a role in the intracellular transport of long-chain fatty acids and their acyl-CoA esters. The polypeptide is Fatty acid-binding protein (Lepidoglyphus destructor (Storage mite)).